Reading from the N-terminus, the 320-residue chain is N-acetylneuraminate lyase (320 aa).

2 residues coordinate aceneuramate: threonine 51 and threonine 52. Catalysis depends on tyrosine 143, which acts as the Proton donor. The active-site Schiff-base intermediate with substrate is lysine 173. 5 residues coordinate aceneuramate: serine 175, glycine 199, aspartate 201, glutamate 202, and serine 218.

Belongs to the DapA family. NanA subfamily. As to quaternary structure, homotetramer. In terms of tissue distribution, isoform 2 is expressed in placenta, liver, kidney, pancreas, spleen, thymus, ovary, small intestine and peripheral blood leukocyte.

The protein resides in the cytoplasm. It carries out the reaction aceneuramate = aldehydo-N-acetyl-D-mannosamine + pyruvate. It participates in amino-sugar metabolism; N-acetylneuraminate degradation. Its function is as follows. Catalyzes the cleavage of N-acetylneuraminic acid (sialic acid) to form pyruvate and N-acetylmannosamine via a Schiff base intermediate. It prevents sialic acids from being recycled and returning to the cell surface. Involved in the N-glycolylneuraminic acid (Neu5Gc) degradation pathway. Although human is not able to catalyze formation of Neu5Gc due to the inactive CMAHP enzyme, Neu5Gc is present in food and must be degraded. This is N-acetylneuraminate lyase from Homo sapiens (Human).